The sequence spans 245 residues: Uridylate kinase (245 aa).

ATP is bound at residue 20–23; the sequence is KLSG. Gly-60 contributes to the UMP binding site. The ATP site is built by Gly-61 and Arg-65. Residues Asp-80 and 141–148 contribute to the UMP site; that span reads AGLPYFST. ATP-binding residues include Tyr-175 and Asp-178.

The protein belongs to the UMP kinase family. Homohexamer.

The protein resides in the cytoplasm. The catalysed reaction is UMP + ATP = UDP + ADP. The protein operates within pyrimidine metabolism; CTP biosynthesis via de novo pathway; UDP from UMP (UMPK route): step 1/1. With respect to regulation, inhibited by UTP. Its function is as follows. Catalyzes the reversible phosphorylation of UMP to UDP. The sequence is that of Uridylate kinase from Arthrobacter sp. (strain FB24).